The following is a 130-amino-acid chain: Small ribosomal subunit protein uS11c (130 aa).

Belongs to the universal ribosomal protein uS11 family. In terms of assembly, part of the 30S ribosomal subunit.

Its subcellular location is the plastid. It localises to the chloroplast. The sequence is that of Small ribosomal subunit protein uS11c from Guillardia theta (Cryptophyte).